The primary structure comprises 354 residues: UDP-glucose 4-epimerase 1 (354 aa).

Residue 8-39 (TILVTGGAGYIGSHTVLQLLQLGFRVVVLDNL) participates in NAD(+) binding. Residue serine 133 coordinates substrate. Tyrosine 157 serves as the catalytic Proton acceptor.

This sequence belongs to the NAD(P)-dependent epimerase/dehydratase family. NAD(+) is required as a cofactor.

The enzyme catalyses UDP-alpha-D-glucose = UDP-alpha-D-galactose. Its pathway is carbohydrate metabolism; galactose metabolism. In terms of biological role, catalyzes the interconversion between UDP-glucose and UDP-galactose. The sequence is that of UDP-glucose 4-epimerase 1 (UGE-1) from Oryza sativa subsp. japonica (Rice).